The chain runs to 189 residues: Methylated-DNA--protein-cysteine methyltransferase (189 aa).

Positions 128 and 142 each coordinate DNA. C159 functions as the Nucleophile; methyl group acceptor in the catalytic mechanism. S165 contributes to the DNA binding site.

This sequence belongs to the MGMT family.

It is found in the nucleus. The catalysed reaction is a 6-O-methyl-2'-deoxyguanosine in DNA + L-cysteinyl-[protein] = S-methyl-L-cysteinyl-[protein] + a 2'-deoxyguanosine in DNA. It carries out the reaction a 4-O-methyl-thymidine in DNA + L-cysteinyl-[protein] = a thymidine in DNA + S-methyl-L-cysteinyl-[protein]. Functionally, involved in the cellular defense against the biological effects of O6-methylguanine (O6-MeG) and O4-methylthymine (O4-MeT) in DNA. Repairs the methylated nucleobase in DNA by stoichiometrically transferring the methyl group to a cysteine residue in the enzyme. This is a suicide reaction: the enzyme is irreversibly inactivated. The sequence is that of Methylated-DNA--protein-cysteine methyltransferase (MGT1) from Kluyveromyces lactis (strain ATCC 8585 / CBS 2359 / DSM 70799 / NBRC 1267 / NRRL Y-1140 / WM37) (Yeast).